The chain runs to 146 residues: Transcriptional regulator MraZ (146 aa).

2 consecutive SpoVT-AbrB domains span residues 5 to 51 and 80 to 123; these read NHPT…PLQE and GQMV…NHEA.

The protein belongs to the MraZ family. Forms oligomers.

It is found in the cytoplasm. The protein resides in the nucleoid. This Acidobacterium capsulatum (strain ATCC 51196 / DSM 11244 / BCRC 80197 / JCM 7670 / NBRC 15755 / NCIMB 13165 / 161) protein is Transcriptional regulator MraZ.